Consider the following 572-residue polypeptide: Cytosolic Fe-S cluster assembly factor NAR1 (572 aa).

[4Fe-4S] cluster contacts are provided by Cys20, Cys62, Cys65, Cys68, Cys205, and Cys260. Residues Ala416–Lys436 form a disordered region. Positions 450 and 454 each coordinate [4Fe-4S] cluster.

This sequence belongs to the NARF family.

Component of the cytosolic Fe/S protein assembly machinery. Required for maturation of extramitochondrial Fe/S proteins. May play a role in the transfer of pre-assembled Fe/S clusters to target apoproteins. The sequence is that of Cytosolic Fe-S cluster assembly factor NAR1 (NAR1) from Botryotinia fuckeliana (strain B05.10) (Noble rot fungus).